A 428-amino-acid polypeptide reads, in one-letter code: UPF0229 protein YeaH (428 aa).

Residues 78-90 are compositionally biased toward basic and acidic residues; the sequence is GNDHFIQNDRIER. A disordered region spans residues 78-111; the sequence is GNDHFIQNDRIERPQGGGGGGSGSGQGQASQDGE. Over residues 92–103 the composition is skewed to gly residues; that stretch reads QGGGGGGSGSGQ.

The protein belongs to the UPF0229 family.

This Salmonella enteritidis PT4 (strain P125109) protein is UPF0229 protein YeaH.